The sequence spans 326 residues: Glycolipid sulfotransferase MRA_1383 (326 aa).

40 to 45 (KSGLTW) serves as a coordination point for 3'-phosphoadenylyl sulfate. The Proton acceptor role is filled by His-97. 116-124 (RDPRDAAVS) provides a ligand contact to 3'-phosphoadenylyl sulfate.

The protein belongs to the sulfotransferase 1 family.

In terms of biological role, involved in the synthesis of cell wall sulfolipids. This is Glycolipid sulfotransferase MRA_1383 from Mycobacterium tuberculosis (strain ATCC 25177 / H37Ra).